Consider the following 455-residue polypeptide: MSRFAILVTLALAIATVSVVIAQVPPEKQFRVVNEGEFGEYITEYDASYRFIESSNQSFFTSPFQLLFYNTTPSAYILALRVGLRRDESTMRWIWDANRNNPVGENATLSLGRNGNLVLAEADGRVKWQTNTANKGVTGFQILPNGNIVLHDKNGKFVWQSFDHPTDTLLTGQSLKVNGVNKLVSRTSDSNGSDGPYSMVLDKKGLTMYVNKTGTPLVYGGWPDHDFRGTVTFAVTREFDNLTEPSAYELLLEPAPQPATNPGNNRRLLQVRPIGSGGGTLNLNKINYNGTISYLRLGSDGSLKAYSYFPAATYLKWEESFSFFSTYFVRQCGLPSFCGDYGYCDRGMCNACPTPKGLLGWSDKCAPPKTTQFCSGVKGKTVNYYKIVGVEHFTGPYVNDGQGPTSVNDCKAKCDRDCKCLGYFYKEKDKKCLLAPLLGTLIKDANTSSVAYIKY.

The N-terminal stretch at 1 to 22 (MSRFAILVTLALAIATVSVVIA) is a signal peptide. The Bulb-type lectin domain maps to 44 to 163 (EYDASYRFIE…NGKFVWQSFD (120 aa)). N-linked (GlcNAc...) asparagine glycans are attached at residues Asn-56, Asn-106, Asn-191, Asn-211, Asn-241, and Asn-289. At Cys-374 the chain carries S-nitrosocysteine. A PAN domain is found at 374–455 (CSGVKGKTVN…NTSSVAYIKY (82 aa)). Cystine bridges form between Cys-410-Cys-432 and Cys-414-Cys-420. The N-linked (GlcNAc...) asparagine glycan is linked to Asn-446.

It localises to the secreted. The protein resides in the cell wall. This chain is EP1-like glycoprotein 2, found in Arabidopsis thaliana (Mouse-ear cress).